Reading from the N-terminus, the 240-residue chain is MIENWHRGFVLHRREYSETSLLVDFFTEEHGRVTLLAKGARRPRSPLKAVLQPFTPLLLRWSGKGDLKTLTKAEPASLTLPMQTLALYSGFYVNEVLARVLENQTAYPELFQHYLQCMTRLATQPKQIEPILRTFEFQMLKALGYGVNFSICAATGDPVSPSMTYQFRENQGFIASLLQNNYTFLGKDLLAFEQLNFSDKATLQAAKRFTRMALKPYLGSQPLKSRELFQSILPNKLKSS.

This sequence belongs to the RecO family.

Involved in DNA repair and RecF pathway recombination. The polypeptide is DNA repair protein RecO (Actinobacillus pleuropneumoniae serotype 5b (strain L20)).